Here is a 328-residue protein sequence, read N- to C-terminus: Putative HTH-type transcriptional regulatory protein MA_3524 (328 aa).

An HTH cro/C1-type domain is found at 132 to 190 (LKKARTDQSMSLGTLASMVGVSRRTISKYEEEGMDASIDVVLQLEDIFGVELARPIDIL). The H-T-H motif DNA-binding region spans 143–162 (LGTLASMVGVSRRTISKYEE).

This is Putative HTH-type transcriptional regulatory protein MA_3524 from Methanosarcina acetivorans (strain ATCC 35395 / DSM 2834 / JCM 12185 / C2A).